The primary structure comprises 152 residues: Diamine acetyltransferase (152 aa).

Positions 5–152 (FEVRKATIDD…SFLDLTPKSD (148 aa)) constitute an N-acetyltransferase domain. Tyr127 functions as the Proton donor in the catalytic mechanism.

The protein belongs to the acetyltransferase family. In terms of assembly, homotetramer.

It is found in the cytoplasm. The catalysed reaction is an alkane-alpha,omega-diamine + acetyl-CoA = an N-acetylalkane-alpha,omega-diamine + CoA + H(+). It functions in the pathway amine and polyamine degradation; putrescine degradation; N-acetylputrescine from putrescine: step 1/1. Its function is as follows. Enzyme which catalyzes the acetylation of polyamines. Displays higher substrate specificity for spermine than for spermidine. May function to acetylate host-derived polyamines, thus alleviating the necessity for de novo synthesis of these molecules. In Cryptosporidium parvum (strain Iowa II), this protein is Diamine acetyltransferase.